A 452-amino-acid polypeptide reads, in one-letter code: tRNA pseudouridine synthase Pus10 (452 aa).

In terms of domain architecture, THUMP spans Glu71–Pro200. Asp269 acts as the Nucleophile in catalysis. 2 residues coordinate substrate: Tyr335 and Tyr406.

It belongs to the pseudouridine synthase Pus10 family.

The enzyme catalyses uridine(54) in tRNA = pseudouridine(54) in tRNA. It catalyses the reaction uridine(55) in tRNA = pseudouridine(55) in tRNA. Its function is as follows. Responsible for synthesis of pseudouridine from uracil-54 and uracil-55 in the psi GC loop of transfer RNAs. In Methanothrix thermoacetophila (strain DSM 6194 / JCM 14653 / NBRC 101360 / PT) (Methanosaeta thermophila), this protein is tRNA pseudouridine synthase Pus10.